A 2877-amino-acid chain; its full sequence is Desmoplakin (2877 aa).

A disordered region spans residues 1 to 20 (MSCNGGSHPRINTLGRMTRA). Positions 1-591 (MSCNGGSHPR…DYMKTIEDLE (591 aa)) are interaction with PKP1, JUP, PKP2. The segment at 1-1063 (MSCNGGSHPR…ANSENCNKNK (1063 aa)) is globular 1. Phosphoserine is present on residues Ser22 and Ser62. Position 65 is a phosphotyrosine (Tyr65). Thr70 carries the phosphothreonine modification. 3 positions are modified to phosphoserine: Ser174, Ser175, and Ser183. Spectrin repeat units lie at residues 185 to 278 (SGWD…HLRQ) and 279 to 382 (LQNI…LKEN). A Spectrin 3a repeat occupies 383–453 (AAYFQFFEEA…NLVNKSKKIV (71 aa)). The region spanning 465 to 522 (NKPIILRALCDYKQDQKIVHKGDECILKDNNERSKWYVTGPGGVDMLVPSVGLIIPPP) is the SH3 domain. A Spectrin 3b repeat occupies 523–552 (NPLAVDLSCKIEQYYEAILALWNQLYINMK). 3 Spectrin repeats span residues 553-634 (SLVS…IQLP), 661-776 (VIET…SLCS), and 777-890 (VRAL…DLEK). Coiled coils occupy residues 1034 to 1280 (LKLK…AEEN), 1313 to 1354 (NARH…YENE), 1395 to 1443 (TSGY…QKAS), and 1473 to 1926 (KQSL…KLED). The central fibrous rod domain stretch occupies residues 1064-1952 (FLDQNLQKYQ…QKEIDKLRQR (889 aa)). Ser1665, Ser1715, and Ser2031 each carry phosphoserine. The tract at residues 1953–2877 (PYGSHRETQT…YSFSSSSIGY (925 aa)) is globular 2. Residues 1967-2215 (TVDSSKLVFD…LLLSVQKRSM (249 aa)) form a 4.5 X 38 AA tandem repeats (Domain A) region. 17 Plectin repeats span residues 2016–2052 (QPFL…PEST), 2053–2090 (VMLL…FDDR), 2091–2128 (QQIY…RETG), 2129–2166 (MRLL…RDLY), 2170–2204 (NDPR…PHTG), 2205–2240 (LLLL…PSTV), 2258–2295 (KDFL…PGTA), 2296–2333 (LELL…IEFK), 2334–2371 (EKLL…KGHG), 2372–2409 (IRLL…EELS), 2413–2447 (SDPS…EETG), 2463–2500 (SQKN…YETF), 2514–2551 (TITG…RKFF), 2617–2654 (SDPL…SITG), 2655–2692 (QRLL…QDMA), 2731–2768 (QRFL…GRAA), and 2769–2806 (QRLQ…DITG). Ser2214, Ser2216, and Ser2232 each carry phosphoserine. The segment at 2251–2453 (DEVGERIKDF…EETGLCLLPL (203 aa)) is 4.5 X 38 AA tandem repeats (Domain B). The stretch at 2603–2628 (ISSVRNLTIRSSSLSDPLEESSPIAA) is one LRR 15 repeat. Residues 2616–2828 (LSDPLEESSP…GLPSPYNMSA (213 aa)) are 4.5 X 38 AA tandem repeats (Domain C). Phosphoserine is present on residues Ser2817 and Ser2822. The disordered stretch occupies residues 2817–2877 (SKGLPSPYNM…YSFSSSSIGY (61 aa)). Tyr2824 is subject to Phosphotyrosine. Residues Ser2827 and Ser2831 each carry the phosphoserine modification. The segment at 2830–2853 (GSRSGSRSGSRSGSRSGSRSGSRR) is 6 X 4 AA tandem repeats of G-S-R-[SR]. Positions 2830-2853 (GSRSGSRSGSRSGSRSGSRSGSRR) are enriched in low complexity. Omega-N-methylarginine occurs at positions 2832 and 2853. Ser2855 carries the post-translational modification Phosphoserine. Thr2859 carries the post-translational modification Phosphothreonine. Low complexity predominate over residues 2862-2877 (SSYSYSYSFSSSSIGY). Ser2874 is subject to Phosphoserine.

This sequence belongs to the plakin or cytolinker family. In terms of assembly, homodimer. Interacts with COL17A1 (via cytoplasmic region). Interacts with DSC2. Interacts with PKP1. Interacts with PKP2. Interacts weakly with TMEM65. In terms of processing, phosphorylation at Ser-2855 increases association with intermediate filament cytokeratin, potentially facilitating interaction between desmosome junctions and intermediate filament architecture. In terms of tissue distribution, expressed in cardiomyocytes (at protein level).

It is found in the cell junction. The protein localises to the desmosome. Its subcellular location is the cell membrane. The protein resides in the cytoplasm. Its function is as follows. Major high molecular weight protein of desmosomes. Regulates profibrotic gene expression in cardiomyocytes via activation of the MAPK14/p38 MAPK signaling cascade and increase in TGFB1 protein abundance. This is Desmoplakin from Rattus norvegicus (Rat).